We begin with the raw amino-acid sequence, 292 residues long: uncharacterized protein (292 aa).

A Glycyl lysine isopeptide (Lys-Gly) (interchain with G-Cter in SUMO2) cross-link involves residue lysine 8. The tract at residues 47 to 67 (TKRKMLPSSSSRMRSDGFDEE) is disordered. Residue lysine 76 forms a Glycyl lysine isopeptide (Lys-Gly) (interchain with G-Cter in SUMO2) linkage. Phosphothreonine is present on asparagine 94. Phosphoserine occurs at positions 96 and 97. The tract at residues 122 to 292 (ETDSDQQDIT…ERSAESSEDD (171 aa)) is disordered. Position 123 is a phosphothreonine (threonine 123). Residues serine 125 and aspartate 126 each carry the phosphoserine modification. Positions 128–140 (QDITNGKKTSPQV) are enriched in polar residues. The segment covering 147–173 (SRKHKKSKKSHKKKQKKRSHKKQKKSK) has biased composition (basic residues). A compositionally biased stretch (polar residues) spans 180 to 194 (TADSSSEFSEETGAS). Basic residues-rich tracts occupy residues 197-215 (RKGKQPHKRKKKSRKKSLK) and 247-259 (KKTKRKKREKKAH). The span at 280-292 (ATDERSAESSEDD) shows a compositional bias: basic and acidic residues.

This is an uncharacterized protein from Homo sapiens (Human).